The chain runs to 242 residues: Adenylate kinase 1 (242 aa).

ATP is bound by residues 38 to 43 (GSGKGT) and G42. The tract at residues 58–87 (STGDLLREAAEKKTELGLKIKNIINEGKLV) is NMP. AMP contacts are provided by residues T59, R64, 85-87 (KLV), G113, 113-116 (GYPR), and Q120. The interval 154-191 (GRLIHKPSGRIYHKIFNPPKVPFRDDVTNEPLIQREDD) is LID. 2 residues coordinate ATP: R155 and Y165. R199 serves as a coordination point for AMP. A229 is an ATP binding site.

It belongs to the adenylate kinase family.

The protein resides in the cytoplasm. It carries out the reaction AMP + ATP = 2 ADP. Its activity is regulated as follows. Inhibited by the dinucleoside pentaphosphate compound P1,P5-di(adenosine-5') pentaphosphate (AP5A). Catalyzes the reversible transfer of the terminal phosphate group between ATP and AMP. Has very low activity with CTP, GTP, ITP and UTP and no activity with GMP, CMP, UMP or IMP in vitro. This chain is Adenylate kinase 1, found in Plasmodium falciparum (isolate 3D7).